The primary structure comprises 206 residues: Large ribosomal subunit protein uL4 (206 aa).

The protein belongs to the universal ribosomal protein uL4 family. As to quaternary structure, part of the 50S ribosomal subunit.

Its function is as follows. One of the primary rRNA binding proteins, this protein initially binds near the 5'-end of the 23S rRNA. It is important during the early stages of 50S assembly. It makes multiple contacts with different domains of the 23S rRNA in the assembled 50S subunit and ribosome. Forms part of the polypeptide exit tunnel. In Methylobacterium radiotolerans (strain ATCC 27329 / DSM 1819 / JCM 2831 / NBRC 15690 / NCIMB 10815 / 0-1), this protein is Large ribosomal subunit protein uL4.